A 296-amino-acid polypeptide reads, in one-letter code: Lipoyl synthase (296 aa).

Residues C34, C39, C45, C60, C64, C67, and S276 each coordinate [4Fe-4S] cluster. Positions 46–265 (WGEGTATFMI…GEVALSMGFK (220 aa)) constitute a Radical SAM core domain.

Belongs to the radical SAM superfamily. Lipoyl synthase family. It depends on [4Fe-4S] cluster as a cofactor.

The protein localises to the cytoplasm. The catalysed reaction is [[Fe-S] cluster scaffold protein carrying a second [4Fe-4S](2+) cluster] + N(6)-octanoyl-L-lysyl-[protein] + 2 oxidized [2Fe-2S]-[ferredoxin] + 2 S-adenosyl-L-methionine + 4 H(+) = [[Fe-S] cluster scaffold protein] + N(6)-[(R)-dihydrolipoyl]-L-lysyl-[protein] + 4 Fe(3+) + 2 hydrogen sulfide + 2 5'-deoxyadenosine + 2 L-methionine + 2 reduced [2Fe-2S]-[ferredoxin]. Its pathway is protein modification; protein lipoylation via endogenous pathway; protein N(6)-(lipoyl)lysine from octanoyl-[acyl-carrier-protein]: step 2/2. Its function is as follows. Catalyzes the radical-mediated insertion of two sulfur atoms into the C-6 and C-8 positions of the octanoyl moiety bound to the lipoyl domains of lipoate-dependent enzymes, thereby converting the octanoylated domains into lipoylated derivatives. The chain is Lipoyl synthase from Pyrobaculum arsenaticum (strain DSM 13514 / JCM 11321 / PZ6).